A 148-amino-acid chain; its full sequence is uncharacterized protein (148 aa).

The [4Fe-4S] cluster site is built by Cys-21, Cys-24, Cys-88, and Cys-117.

It belongs to the complex I 20 kDa subunit family. It depends on [4Fe-4S] cluster as a cofactor.

This is an uncharacterized protein from Methanocaldococcus jannaschii (strain ATCC 43067 / DSM 2661 / JAL-1 / JCM 10045 / NBRC 100440) (Methanococcus jannaschii).